The primary structure comprises 860 residues: Photoactivated adenylate cyclase subunit beta (860 aa).

The region spanning 56 to 149 is the BLUF 1 domain; that stretch reads LRRLMYLSKS…GRMYGDWHMK (94 aa). One can recognise a Guanylate cyclase 1 domain in the interval 205-333; it reads VVTFIYLVEF…DCINTTSRIA (129 aa). The interval 420–443 is disordered; sequence RPPIFDDTPKGKPRPRTPGYGGRQ. Positions 471–563 constitute a BLUF 2 domain; that stretch reads LTTLTYISQA…RAYPAEWTLT (93 aa). One can recognise a Guanylate cyclase 2 domain in the interval 619–748; it reads VMLATDICSF…AVSARVMEVE (130 aa). Positions 819 to 860 are disordered; the sequence is KPLALEPEEAKQDYRVSPGRMRHGDSGRRSNSAQGKRSTQVR. A compositionally biased stretch (polar residues) spans 847-860; that stretch reads RSNSAQGKRSTQVR.

This sequence belongs to the adenylyl cyclase class-4/guanylyl cyclase family. In terms of assembly, heterotetramer of two alpha and two beta subunits. The cofactor is FAD.

Its subcellular location is the cell projection. It localises to the cilium. The protein localises to the flagellum. The enzyme catalyses ATP = 3',5'-cyclic AMP + diphosphate. Its function is as follows. Acts as a photoreceptor for the step-up photophobic response. This chain is Photoactivated adenylate cyclase subunit beta, found in Euglena longa (Euglenophycean alga).